Here is a 168-residue protein sequence, read N- to C-terminus: MDRVGKYGLFIKRISPKDADITKESLETVNNMLVFLAEKLTKQANIIIDQKTLRHDAFLWLLTDIQGELGKHSQDFANSVLYGEKELVFPTKRTENLMRKNTCLRISQSAVKTLTAILEYFCGQIMEASFSQAKKSKRKRIRPIDIEAAISQDKELHSMFGKGVISGR.

The protein resides in the host nucleus. It is found in the host cytoplasm. Its subcellular location is the virion. In terms of biological role, histone-like protein that is recruited to viral factories during viral replication and participates in viral DNA packaging and virion production probably by forming unstable nucleosome-like particles. May compact the viral DNA. The polypeptide is Histone doublet miniH2B-H2A (Melbournevirus (MelV)).